Reading from the N-terminus, the 221-residue chain is Ependymin-2 (221 aa).

The N-terminal stretch at 1–21 (MQDFAFAALSIWLCLGATALA) is a signal peptide. Residues Asn-33, Asn-73, and Asn-97 are each glycosylated (N-linked (GlcNAc...) asparagine).

This sequence belongs to the ependymin family. Post-translationally, binds calcium through the terminal sialic acids. EPDs are synthesized in the meninx and secreted in the cerebrospinal fluid.

It is found in the secreted. Its function is as follows. May play a role in neural plasticity. May be involved during axon regeneration. The chain is Ependymin-2 (epd2) from Oncorhynchus mykiss (Rainbow trout).